The chain runs to 97 residues: YcgL domain-containing protein Psyr_1564 (97 aa).

A YcgL domain is found at 3–87 (RICSIYRSPK…AEDDYIEHLP (85 aa)).

In Pseudomonas syringae pv. syringae (strain B728a), this protein is YcgL domain-containing protein Psyr_1564.